The primary structure comprises 314 residues: tRNA pseudouridine synthase B (314 aa).

The active-site Nucleophile is aspartate 54.

Belongs to the pseudouridine synthase TruB family. Type 1 subfamily.

The enzyme catalyses uridine(55) in tRNA = pseudouridine(55) in tRNA. Responsible for synthesis of pseudouridine from uracil-55 in the psi GC loop of transfer RNAs. The sequence is that of tRNA pseudouridine synthase B from Cupriavidus metallidurans (strain ATCC 43123 / DSM 2839 / NBRC 102507 / CH34) (Ralstonia metallidurans).